Consider the following 388-residue polypeptide: Galactokinase (388 aa).

33–36 (EHTD) is a substrate binding site. Residues Ser-67 and 125–131 (GSGLSSS) each bind ATP. Mg(2+) contacts are provided by Ser-131 and Glu-163. The active-site Proton acceptor is the Asp-175. Tyr-225 contributes to the substrate binding site.

This sequence belongs to the GHMP kinase family. GalK subfamily.

The protein localises to the cytoplasm. It carries out the reaction alpha-D-galactose + ATP = alpha-D-galactose 1-phosphate + ADP + H(+). It functions in the pathway carbohydrate metabolism; galactose metabolism. Functionally, catalyzes the transfer of the gamma-phosphate of ATP to D-galactose to form alpha-D-galactose-1-phosphate (Gal-1-P). In Lactobacillus helveticus (Lactobacillus suntoryeus), this protein is Galactokinase.